The following is a 542-amino-acid chain: CTP synthase (542 aa).

Positions 1–265 are amidoligase domain; that stretch reads MARYVFITGG…DSEILSAFGI (265 aa). Serine 13 provides a ligand contact to CTP. UTP is bound at residue serine 13. 14 to 19 serves as a coordination point for ATP; sequence SLGKGI. Tyrosine 54 serves as a coordination point for L-glutamine. An ATP-binding site is contributed by aspartate 71. Mg(2+) is bound by residues aspartate 71 and glutamate 139. CTP-binding positions include 146 to 148, 186 to 191, and lysine 222; these read DIE and KTKPTQ. Residues 186–191 and lysine 222 each bind UTP; that span reads KTKPTQ. A Glutamine amidotransferase type-1 domain is found at 291–541; that stretch reads TIAIVGKYTG…IAATVEQSRL (251 aa). Alanine 353 contacts L-glutamine. Cysteine 380 acts as the Nucleophile; for glutamine hydrolysis in catalysis. L-glutamine contacts are provided by residues 381-384, glutamate 404, and arginine 469; that span reads FGMQ. Active-site residues include histidine 514 and glutamate 516.

This sequence belongs to the CTP synthase family. Homotetramer.

The enzyme catalyses UTP + L-glutamine + ATP + H2O = CTP + L-glutamate + ADP + phosphate + 2 H(+). It catalyses the reaction L-glutamine + H2O = L-glutamate + NH4(+). It carries out the reaction UTP + NH4(+) + ATP = CTP + ADP + phosphate + 2 H(+). The protein operates within pyrimidine metabolism; CTP biosynthesis via de novo pathway; CTP from UDP: step 2/2. Its activity is regulated as follows. Allosterically activated by GTP, when glutamine is the substrate; GTP has no effect on the reaction when ammonia is the substrate. The allosteric effector GTP functions by stabilizing the protein conformation that binds the tetrahedral intermediate(s) formed during glutamine hydrolysis. Inhibited by the product CTP, via allosteric rather than competitive inhibition. Catalyzes the ATP-dependent amination of UTP to CTP with either L-glutamine or ammonia as the source of nitrogen. Regulates intracellular CTP levels through interactions with the four ribonucleotide triphosphates. This is CTP synthase from Bartonella bacilliformis (strain ATCC 35685 / KC583 / Herrer 020/F12,63).